The chain runs to 213 residues: Cytochrome b6 (213 aa).

Residues 30 to 50 form a helical membrane-spanning segment; that stretch reads IFYCLGGLTLLAFLVQCVTGL. Position 33 (C33) interacts with heme c. Residues H84 and H98 each coordinate heme b. Helical transmembrane passes span 88 to 108, 114 to 134, and 184 to 204; these read ANLMILLVFLHMLRVYYTGSF, LNWLAGCFLLVLSLGLAFTGY, and LHVMILPLVTIGFLVAHFIMI. Positions 185 and 200 each coordinate heme b.

It belongs to the cytochrome b family. PetB subfamily. In terms of assembly, the subunits of the cytochrome bc complex are a Rieske Fe-S protein (PetC), cytochrome b6 (PetB), subunit IV (PetD), and a diheme cytochrome c (PetX). It depends on heme b as a cofactor. The cofactor is heme c.

It is found in the cell membrane. Component of the cytochrome bc complex which donates electrons to the photosynthetic reaction center. The protein is Cytochrome b6 of Heliobacterium mobile (Heliobacillus mobilis).